Consider the following 415-residue polypeptide: uncharacterized protein (415 aa).

This is an uncharacterized protein from Methanocaldococcus jannaschii (strain ATCC 43067 / DSM 2661 / JAL-1 / JCM 10045 / NBRC 100440) (Methanococcus jannaschii).